Reading from the N-terminus, the 150-residue chain is uncharacterized protein (150 aa).

An HTH asnC-type domain is found at 5–66 (LDKVDRRLLE…KPNYKKLNLG (62 aa)). The segment at residues 24-43 (IATLSKKLGIPRTTVHYRIK) is a DNA-binding region (H-T-H motif).

This is an uncharacterized protein from Pyrococcus abyssi (strain GE5 / Orsay).